The sequence spans 531 residues: MLQDIVEQWQIMQQALAPLRLTRWQLTKMFAAQVYRDHPVGALLGISLSVVLLLWVISVVTRPKKLEDVLGLPVLGGSRTLKSDFLRIIEEGKQRYPDTPYIVNASGLQYVVYPPIFFDEIKRLTEQEASAQDFFHTVTYGQWTHIGAETDALWKTIAVDLARSVPVKVPSKQKDARIAFDKYVGYCPESKPVTIFDTMMKIVATTNACSFVGREVGTGEWPQVVQQLPMSVYFAVMTLSIVPRIFRPVLLPIVLIPALLVQRKMRKILAPGIRQDMEEYERAADRKELLKPTEDGKLPFTQWLMARYKPGEATAHQLATDHLLTSFESTVSTAATLYNMILDLAVRPELQDELRQEVEEIMVDGKLPATHLKELKKMDSMMRETFRVNPFALFSLYRITRKPIQLSSGPKLPAGTILCVDSHHINNSAELFPEPAKFDPYRFLKKREEPGAENRFQFVSTGPTDPNWGDGTQACPGRFFANSTLKVCLAHVLLKYNVSLREGQERPKMVSMPNGIWAPDMAAQVLFQSRD.

Residues 40-60 (VGALLGISLSVVLLLWVISVV) form a helical membrane-spanning segment. A heme-binding site is contributed by cysteine 475.

The protein belongs to the cytochrome P450 family. The cofactor is heme.

The protein resides in the membrane. It participates in mycotoxin biosynthesis. In terms of biological role, cytochrome P450 monooxygenase; part of the gene cluster that mediates the biosynthesis of the cytotoxic leucine-containing cytochalasans, including aspochalasin C, aspochalasin E, TMC-169, flavichalasine F, aspergillin PZ, aspochalasin M and flavichalasine G. The first step in the pathway is catalyzed by the hybrid PKS-NRPS ffsA that utilizes 8 units of malonyl-CoA to iteratively assemble the octaketide chain before addition of L-leucine by the C-terminal NRPS modules. Because ffsA lacks a designated enoylreductase (ER) domain, the required activity is provided the enoyl reductase fssC. The methyltransferase (MT) domain of ffsA catalyzes the alpha-methylation at C10 and C14 using S-adenosyl-L-methionine as the methyl-donating cosubstrate. Reduction by the hydrolyase ffsE, followed by dehydration and intra-molecular Diels-Alder cyclization by the Diels-Alderase ffsF then yield the required isoindolone-fused macrocycle. A number of oxidative steps catalyzed by the tailoring cytochrome P450 monooxygenase ffsD, the FAD-linked oxidoreductase ffsJ and the short-chain dehydrogenase/reductase ffsI, are further required to afford the final products. In Aspergillus flavipes, this protein is Cytochrome P450 monooxygenase ffsD.